The chain runs to 706 residues: Envelope glycoprotein H (706 aa).

An N-terminal signal peptide occupies residues 1-18; it reads MQLLCVFCLVLLWEVGAA. At 19–682 the chain is on the virion surface side; sequence SLSEVKLHLD…LYEERAHVVL (664 aa). An N-linked (GlcNAc...) asparagine; by host glycan is attached at asparagine 60. Residues 165–229 are interaction with gL; that stretch reads DKFQYTGAMT…QSGDYSLVIV (65 aa). A disulfide bridge links cysteine 278 with cysteine 335. N-linked (GlcNAc...) asparagine; by host glycosylation occurs at asparagine 435. 2 cysteine pairs are disulfide-bonded: cysteine 454/cysteine 478 and cysteine 534/cysteine 587. Residues asparagine 549 and asparagine 604 are each glycosylated (N-linked (GlcNAc...) asparagine; by host). A disulfide bond links cysteine 612 and cysteine 615. Residue asparagine 664 is glycosylated (N-linked (GlcNAc...) asparagine; by host). Residues 683–703 traverse the membrane as a helical segment; the sequence is AIILYFIAFALGIFLVHKIVM. The Intravirion segment spans residues 704 to 706; it reads FFL.

The protein belongs to the herpesviridae glycoprotein H family. As to quaternary structure, interacts with glycoprotein L (gL); this interaction is necessary for the correct processing and cell surface expression of gH. The heterodimer gH/gL seems to interact with gB trimers during fusion. The heterodimer gH/gL interacts with host EPHA2 to facilitate virus internalization and fusion. Interacts with glycoprotein 42/BZLF2. Post-translationally, N-glycosylated, O-glycosylated, and sialylated.

The protein localises to the virion membrane. Its subcellular location is the host cell membrane. It localises to the host endosome membrane. In terms of biological role, the heterodimer glycoprotein H-glycoprotein L is required for the fusion of viral and plasma membranes leading to virus entry into the host cell. Following initial binding to host receptor, membrane fusion is mediated by the fusion machinery composed of gB and the heterodimer gH/gL. May also be involved in the fusion between the virion envelope and the outer nuclear membrane during virion morphogenesis. The heterodimer gH/gL targets also host EPHA2 to promote viral entry. The polypeptide is Envelope glycoprotein H (Homo sapiens (Human)).